A 472-amino-acid chain; its full sequence is MATTAGAKKGLWSTIRRIAASDRISGLIMLGFALTGLVLANLPATAHAFETVAETHLFIPYTNLDLPIGHWAQDGLLTIFFLTVGLELKQELTTGSLANPKAAAVPMLCAVGGMIAPPILFLAVTALFSQIGPGEPGTLILTTTGSSIPFSEMSHGWAVPTATDIAFSLAVLALFAKALPGSIRAFLMTLATVDDLLAIILIAVFFSSINAWYWFIGIAVCAAIWAYLVRLKKVPWIAVGIVGILAWIMMFEAGVHPTLAGVLVGLLTPSREMHGELSPRAERYANKLQPFSALLALPIFALFATGVHFESMSPLLLASPLVIALIVALVVGKPLGIITTAWLSTHVGGLKMAKGLRVRDMIPAAVACGIGFTVSFLIASLAYKNAELSAEARFGVLVASLIAAAISGVLLSRQSKRFEKTAAAAAADEEDDESIDGDGIGQPSHTTEPTTPTEHPGTLADGTASVEIDFRH.

A run of 10 helical transmembrane segments spans residues 24–44, 66–86, 108–128, 156–176, 196–216, 234–254, 290–310, 312–332, 361–381, and 392–412; these read ISGL…NLPA, LPIG…TVGL, LCAV…TALF, GWAV…ALFA, LLAI…YWFI, VPWI…FEAG, PFSA…VHFE, MSPL…LVVG, MIPA…IASL, and ARFG…VLLS. Residues 422–472 are disordered; the sequence is AAAAAADEEDDESIDGDGIGQPSHTTEPTTPTEHPGTLADGTASVEIDFRH. Acidic residues predominate over residues 427–436; the sequence is ADEEDDESID. Residues 445–456 show a composition bias toward low complexity; sequence HTTEPTTPTEHP.

It belongs to the NhaA Na(+)/H(+) (TC 2.A.33) antiporter family.

The protein resides in the cell membrane. The catalysed reaction is Na(+)(in) + 2 H(+)(out) = Na(+)(out) + 2 H(+)(in). Na(+)/H(+) antiporter that extrudes sodium in exchange for external protons. The protein is Na(+)/H(+) antiporter NhaA of Bifidobacterium longum (strain NCC 2705).